A 134-amino-acid polypeptide reads, in one-letter code: Fluoride-specific ion channel FluC (134 aa).

4 helical membrane passes run 7–27, 38–58, 69–89, and 110–130; these read LAVA…TIMA, GTLL…IVLV, LFLF…AAES, and VGSL…LLGH. The Na(+) site is built by G77 and T80.

Belongs to the fluoride channel Fluc/FEX (TC 1.A.43) family.

The protein resides in the cell inner membrane. The catalysed reaction is fluoride(in) = fluoride(out). With respect to regulation, na(+) is not transported, but it plays an essential structural role and its presence is essential for fluoride channel function. Fluoride-specific ion channel. Important for reducing fluoride concentration in the cell, thus reducing its toxicity. This Legionella pneumophila (strain Lens) protein is Fluoride-specific ion channel FluC.